The following is an 811-amino-acid chain: G-type lectin S-receptor-like serine/threonine-protein kinase LECRK2 (811 aa).

The signal sequence occupies residues 1–23; sequence MAPLLFLPILQLLLLYCTKSAQA. The Bulb-type lectin domain occupies 24 to 153; the sequence is QLNISIGSSL…DGATKWESFG (130 aa). Over 24-464 the chain is Extracellular; that stretch reads QLNISIGSSL…DKKYWILGSS (441 aa). 7 N-linked (GlcNAc...) asparagine glycosylation sites follow: Asn26, Asn39, Asn59, Asn219, Asn226, Asn237, and Asn242. Positions 292–344 constitute an EGF-like; atypical domain; it reads PENICQTIQTKVGSGACGFNSYCTFDGTKNTTNCLCPQRYKFFDNERTYKGCR. 5 cysteine pairs are disulfide-bonded: Cys296–Cys314, Cys308–Cys325, Cys327–Cys343, Cys389–Cys411, and Cys393–Cys399. Asn321 carries N-linked (GlcNAc...) asparagine glycosylation. The PAN domain maps to 352-436; it reads CDLDETAAMV…LQATVLLKVP (85 aa). Residues 465 to 485 traverse the membrane as a helical segment; that stretch reads LFFGSSVLVNFLLIFVLLFGT. Over 486-811 the chain is Cytoplasmic; that stretch reads YCSITSRKKT…DPSSYISSLA (326 aa). The region spanning 521–795 is the Protein kinase domain; it reads GGFHEVLGTG…KVMQMLDGAV (275 aa). Residues 527-535 and Lys551 contribute to the ATP site; that span reads LGTGASGIV. Asp645 functions as the Proton acceptor in the catalytic mechanism.

Belongs to the protein kinase superfamily. Ser/Thr protein kinase family.

The protein localises to the membrane. It catalyses the reaction L-seryl-[protein] + ATP = O-phospho-L-seryl-[protein] + ADP + H(+). It carries out the reaction L-threonyl-[protein] + ATP = O-phospho-L-threonyl-[protein] + ADP + H(+). Involved in resistance against the herbivorous insect brown planthopper (N.lugens, BPH). Member of the BPH3 (BPH resistance locus 3) cluster which contains LECRK1, LECRK2 and LECRK3. The chain is G-type lectin S-receptor-like serine/threonine-protein kinase LECRK2 from Oryza sativa subsp. japonica (Rice).